The chain runs to 236 residues: MKKGFMLFTLLAAFSGFAQADDAAIQQTLAKMGIKSSDIQPAPVAGMKTVLTNSGVLYITDDGKHIIQGPMYDVSGTAPVNVTNKMLLKQLNALEKEMIVYKAPQEKHVITVFTDITCGYCHKLHEQMADYNALGITVRYLAFPRQGLDSDAEKEMKAIWCAKDKNKAFDDVMAGKSVAPASCDVDIADHYALGVQLGVSGTPAVVLSNGTLVPGYQPPKEMKEFLDEHQKMTSGK.

A signal peptide spans 1–20 (MKKGFMLFTLLAAFSGFAQA). The Thioredoxin domain maps to 36 to 231 (SSDIQPAPVA…MKEFLDEHQK (196 aa)). 2 cysteine pairs are disulfide-bonded: cysteine 118/cysteine 121 and cysteine 161/cysteine 183.

It belongs to the thioredoxin family. DsbC subfamily. Homodimer.

It localises to the periplasm. Functionally, required for disulfide bond formation in some periplasmic proteins. Acts by transferring its disulfide bond to other proteins and is reduced in the process. DsbC is reoxidized by a yet uncharacterized protein. Also acts as a disulfide isomerase. The polypeptide is Thiol:disulfide interchange protein DsbC (dsbC) (Escherichia coli O157:H7).